Here is a 1055-residue protein sequence, read N- to C-terminus: Bifunctional fucokinase/GDP-fucose pyrophosphorylase (1055 aa).

A GDP-fucose pyrophosphorylase region spans residues 34-565 (WDAIVLTAAS…SSQRVSLEEL (532 aa)). The segment at 693–1055 (GKSHSENHIS…VKVYNWSICI (363 aa)) is L-fucokinase. ATP is bound at residue 826–836 (PRGSGLGTSSI).

Belongs to the GHMP kinase family. Requires Mn(2+) as cofactor. Mg(2+) serves as cofactor. As to expression, ubiquitous. Highest expression in flower buds.

It carries out the reaction L-fucose + ATP = beta-L-fucose 1-phosphate + ADP + H(+). The catalysed reaction is beta-L-fucose 1-phosphate + GTP + H(+) = GDP-beta-L-fucose + diphosphate. In terms of biological role, bifunctional enzyme involved in the salvage pathway which converts free L-fucose to GDP-L-fucose. Catalyzes two successive reactions, the ATP-dependent phosphorylation of L-fucose to L-fucose 1-phosphate, and its guanylylation to GDP-L-fucose. The sugar-1-kinase activity has a strict substrate specificity for L-fucose and ATP. The pyrophosphorylase activity has a strict substrate specificity for L-fucose 1-phosphate and GTP. The protein is Bifunctional fucokinase/GDP-fucose pyrophosphorylase (FKGP) of Arabidopsis thaliana (Mouse-ear cress).